The primary structure comprises 311 residues: Transcriptional regulatory protein MoaR1 (311 aa).

The segment at residues 15-117 (LNATTAGAVQ…SEPPGYRLLI (103 aa)) is a DNA-binding region (ompR/PhoB-type).

This sequence belongs to the AfsR/DnrI/RedD regulatory family.

Its function is as follows. Acts as a positive transcriptional regulator of the molybdopterin biosynthesis moa1 locus, promoting the expression of the moaA1B1C1D1 genes. Binds directly to the moaA1 promoter. The polypeptide is Transcriptional regulatory protein MoaR1 (moaR1) (Mycobacterium tuberculosis (strain ATCC 25618 / H37Rv)).